Here is a 1038-residue protein sequence, read N- to C-terminus: MAKVRVYELAKEFGVESKVVMAKLQELGEFVRSASSTIEAPVVRKLTDALQGPGGNAGKSAAKPGAPRKAAPAKPAAPSPAAAARPAAPKPGAPAPKPAEAPSSTPAAPSAPSAGPRPGPKPAPKAAPVTPVPAAEFSAPAPAQPAAPQPQAPRPAGATPGPRPTPARPAPAGGQRDGGRDGGQRDGGRGGERGGDRPARPAGQGAPRPGGARPAGPRPGNNPFTSGGSTGMARPSAPRPGGAPRPGGGQERPGAPRPQGSGPGGAPRPQGGQGQGGARPTPGGMPRPQAPRPGGGPAGNRPNPGMMPQRPAAGPRPGPGGGGRGPGGGGRPGAGGGGRPGGGGFAGRPGGGGGGGFAGRPAGPGGGGGAGRPGGGGGFGGRPGFGGRPGGPGGRGGTQGAFGRPGGPARRGRKSKRQRRQEYEAMQAPSVGGVMLPRGNGQAVRLSRGASLTDFAEKINANPASLVAVMMNLGEMVTATQSVSDETLRLLAEEMNYVLEIVSPEEEDRELLESFDIEFGEDEGGEEALVSRPPVVTVMGHVDHGKTRLLDAIRKTNVVAGEAGGITQHIGAYQVSSEVNGEDRKITFIDTPGHEAFTAMRARGAKSTDIAILVVAANDGVMPQTIEALNHAKAAEVPIVVAVNKIDVEGADPTKVRGQLTEFGLVAEEYGGDTMFVDISAKQGLNIEALLEAVVLTADASLDLRANPEQDAQGIAIESHLDRGRGAVSTVLVQRGTLRIGDTVVVGDAYGRVRAMLDDNGQNVQEAGPSTPVLVLGLTNVPGAGDNLLVVDEDRTARQIAEKRAARERNANFARKGVRFSLENLDEALKAGLVQELNLIIKGDASGSVEALESSLLQLDVGEEVDIRILHRGVGAVTESDINLATGSDAIVIGFNVRAAGRAEQMAEREGVDVRYYSVIYQAIEEIEAALKGLLKPEYEEVELGTAEIREIFRSSKLGNIAGVLVRSGEVKRNTKARLLRDGKVIAENLNISGLRRFKDDVTEIREGFEGGINLGNFNDIKIDDVIATYEMREKPRG.

A disordered region spans residues 48-426 (DALQGPGGNA…RQRRQEYEAM (379 aa)). A compositionally biased stretch (low complexity) spans 58-87 (GKSAAKPGAPRKAAPAKPAAPSPAAAARPA). Pro residues predominate over residues 88–99 (APKPGAPAPKPA). A compositionally biased stretch (low complexity) spans 100–114 (EAPSSTPAAPSAPSA). Residues 115–125 (GPRPGPKPAPK) are compositionally biased toward pro residues. The segment covering 126–141 (AAPVTPVPAAEFSAPA) has biased composition (low complexity). Positions 142-153 (PAQPAAPQPQAP) are enriched in pro residues. The span at 177 to 199 (DGGRDGGQRDGGRGGERGGDRPA) shows a compositional bias: basic and acidic residues. The span at 200-219 (RPAGQGAPRPGGARPAGPRP) shows a compositional bias: low complexity. Gly residues predominate over residues 261 to 277 (SGPGGAPRPQGGQGQGG). The segment covering 299–315 (GNRPNPGMMPQRPAAGP) has biased composition (low complexity). A compositionally biased stretch (gly residues) spans 319–406 (PGGGGRGPGG…GTQGAFGRPG (88 aa)). Positions 410 to 419 (RRGRKSKRQR) are enriched in basic residues. The tr-type G domain maps to 531–703 (SRPPVVTVMG…VVLTADASLD (173 aa)). Residues 540 to 547 (GHVDHGKT) form a G1 region. Residue 540–547 (GHVDHGKT) participates in GTP binding. Residues 565–569 (GITQH) form a G2 region. The segment at 590-593 (DTPG) is G3. GTP-binding positions include 590–594 (DTPGH) and 644–647 (NKID). Positions 644 to 647 (NKID) are G4. A G5 region spans residues 680-682 (SAK).

It belongs to the TRAFAC class translation factor GTPase superfamily. Classic translation factor GTPase family. IF-2 subfamily.

The protein resides in the cytoplasm. One of the essential components for the initiation of protein synthesis. Protects formylmethionyl-tRNA from spontaneous hydrolysis and promotes its binding to the 30S ribosomal subunits. Also involved in the hydrolysis of GTP during the formation of the 70S ribosomal complex. The chain is Translation initiation factor IF-2 from Streptomyces griseus subsp. griseus (strain JCM 4626 / CBS 651.72 / NBRC 13350 / KCC S-0626 / ISP 5235).